The following is an 87-amino-acid chain: U18-myrmicitoxin-Mri1a (87 aa).

A signal peptide spans 1 to 32 (MKNNYNRINTFIVYLMVTFSLISIISITECTP). In terms of domain architecture, EGF-like spans 33–77 (NHDPCPPQYAEALCLNGGTCFSVTIMGSDNYNCICAPGFRGWRCQ). 3 disulfide bridges follow: Cys-37-Cys-52, Cys-46-Cys-65, and Cys-67-Cys-76.

In terms of processing, O-glycosylated. As to expression, expressed by the venom gland.

The protein localises to the secreted. The polypeptide is U18-myrmicitoxin-Mri1a (Manica rubida (European giant red ant)).